The following is a 544-amino-acid chain: Chaperonin GroEL (544 aa).

Residues T29–P32, K50, D86–T90, G414, D479–A481, and D495 contribute to the ATP site.

It belongs to the chaperonin (HSP60) family. Forms a cylinder of 14 subunits composed of two heptameric rings stacked back-to-back. Interacts with the co-chaperonin GroES.

The protein resides in the cytoplasm. It catalyses the reaction ATP + H2O + a folded polypeptide = ADP + phosphate + an unfolded polypeptide.. In terms of biological role, together with its co-chaperonin GroES, plays an essential role in assisting protein folding. The GroEL-GroES system forms a nano-cage that allows encapsulation of the non-native substrate proteins and provides a physical environment optimized to promote and accelerate protein folding. The sequence is that of Chaperonin GroEL from Treponema denticola (strain ATCC 35405 / DSM 14222 / CIP 103919 / JCM 8153 / KCTC 15104).